A 187-amino-acid polypeptide reads, in one-letter code: MSAKIDITGDWTVAVYCAASPTHAELLELAAEVGAAIAGRGWTLVWGGGHVSAMGAVASAARACGGWTVGVIPKMLVYRELADHDADELIVTDTMWERKQIMEDRSDAFIVLPGGVGTLDELFDAWTDGYLGTHDKPIVMVDPWGHFDGLRAWLNGLLDTGYVSPTAMERLVVVDNVKDALRACAPS.

An Isoglutamyl lysine isopeptide (Lys-Gln) (interchain with Q-Cter in protein Pup) cross-link involves residue lysine 74. Residues glutamate 80, 98 to 99 (RK), 115 to 121 (GVGTLDE), and threonine 127 each bind substrate.

It belongs to the LOG family. As to quaternary structure, homodimer. Post-translationally, pupylated at Lys-74 by the prokaryotic ubiquitin-like protein Pup, which leads to its degradation by the proteasome. The proteasomal control of cytokinin synthesis is essential to protect M.tuberculosis against host-produced NO.

The catalysed reaction is N(6)-(dimethylallyl)adenosine 5'-phosphate + H2O = N(6)-dimethylallyladenine + D-ribose 5-phosphate. It carries out the reaction 9-ribosyl-trans-zeatin 5'-phosphate + H2O = trans-zeatin + D-ribose 5-phosphate. Functionally, catalyzes the hydrolytic removal of ribose 5'-monophosphate from nitrogen N6-modified adenosines, the final step of bioactive cytokinin synthesis. Is involved in the synthesis of isopentenyladenine (iP) and 2-methylthio-iP (2MeS-iP), the most abundant cytokinins detected in M.tuberculosis lysates and supernatants. Is also able to convert trans-zeatin-riboside monophosphate (tZRMP) to trans-zeatin (tZ) in vitro; however, it may not be involved in the biosynthesis of this minor cytokinin in vivo. Accumulation of Rv1205 sensitizes M.tuberculosis to nitric oxide since cytokinin breakdown products synergize with NO to kill M.tuberculosis. Shows a slow AMP hydrolase activity, but is not able to hydrolyze ATP. Displays no lysine decarboxylase (LDC) activity (L-lysine conversion to cadaverine). The polypeptide is Cytokinin riboside 5'-monophosphate phosphoribohydrolase (Mycobacterium tuberculosis (strain ATCC 25618 / H37Rv)).